The sequence spans 107 residues: Ornithine carbamoyltransferase, catabolic (107 aa).

Residues 57–61 (STRTR) and Gln-84 contribute to the carbamoyl phosphate site.

This sequence belongs to the aspartate/ornithine carbamoyltransferase superfamily. OTCase family.

The protein localises to the cytoplasm. It catalyses the reaction carbamoyl phosphate + L-ornithine = L-citrulline + phosphate + H(+). It functions in the pathway amino-acid degradation; L-arginine degradation via ADI pathway; carbamoyl phosphate from L-arginine: step 2/2. The chain is Ornithine carbamoyltransferase, catabolic (arcB) from Streptococcus pyogenes.